We begin with the raw amino-acid sequence, 119 residues long: Large ribosomal subunit protein bL20 (119 aa).

Belongs to the bacterial ribosomal protein bL20 family.

Its function is as follows. Binds directly to 23S ribosomal RNA and is necessary for the in vitro assembly process of the 50S ribosomal subunit. It is not involved in the protein synthesizing functions of that subunit. The polypeptide is Large ribosomal subunit protein bL20 (Streptococcus uberis (strain ATCC BAA-854 / 0140J)).